The sequence spans 111 residues: Macrodomain Ori protein (111 aa).

It belongs to the MaoP family.

Its function is as follows. Involved in the organization of the Ori region of the chromosome into a macrodomain (MD). It constrains DNA mobility in the Ori macrodomain and limits long-distance DNA interactions with other chromosomal regions. In Haemophilus influenzae (strain ATCC 51907 / DSM 11121 / KW20 / Rd), this protein is Macrodomain Ori protein.